We begin with the raw amino-acid sequence, 530 residues long: G2/mitotic-specific cyclin-B (530 aa).

Residues alanine 76–asparagine 152 form a disordered region. Positions proline 121–proline 144 are enriched in low complexity. At serine 137 the chain carries Phosphoserine.

It belongs to the cyclin family. Cyclin AB subfamily. As to quaternary structure, interacts with the protein kinase Cdk1 to form a serine/threonine kinase holoenzyme complex also known as maturation promoting factor (MPF). The cyclin subunit imparts substrate specificity to the complex.

Functionally, essential for the control of the cell cycle at the G2/M (mitosis) transition. This is G2/mitotic-specific cyclin-B (CycB) from Drosophila melanogaster (Fruit fly).